The sequence spans 355 residues: Guanine nucleotide-binding protein alpha-12 subunit (355 aa).

Residues 28–355 (RQINLLLLGS…EQNLKTLMMQ (328 aa)) form the G-alpha domain. The tract at residues 31–44 (NLLLLGSGESGKST) is G1 motif. GTP contacts are provided by residues 36-43 (GSGESGKS), 176-182 (LFCRKAT), 201-205 (DVGGQ), 270-273 (NKND), and Ala-327. Positions 43 and 182 each coordinate Mg(2+). A G2 motif region spans residues 174–182 (DILFCRKAT). Residues 197–206 (FRFIDVGGQR) are G3 motif. A G4 motif region spans residues 266–273 (ILFMNKND). Residues 325–330 (TTAVDT) are G5 motif.

The protein belongs to the G-alpha family. In terms of assembly, g proteins are composed of 3 units; alpha, beta and gamma. The alpha chain contains the guanine nucleotide binding site.

Its function is as follows. Guanine nucleotide-binding proteins (G proteins) are involved as modulators or transducers in various transmembrane signaling systems. May play a role in resistance to fungal infection in the epidermis by regulating the up-regulation of several antimicrobial peptides of the NLP and CNC families. Upstream of plc-3, egl-8, tpa-1 and the p38-like pathway, required for the expression of antimicrobial peptide nlp-29 in the epidermis in response to fungal infection or physical injury. In Caenorhabditis briggsae, this protein is Guanine nucleotide-binding protein alpha-12 subunit (gpa-12).